The chain runs to 705 residues: MLKATIQKFQYGKNIVTIETGMIARQATSAVMVRMDDTSVFVTVVADKKEKLGQKFFPLTVNYQERTYSIGRFPGGFFRREGRPNENEVLVSRLIDRSVRPLFPKNFFNDIQIIATVMSVNPQVNPDIVSIIGASAALSLSGLPFKCPIGSSRIGYIDNKYILNPTTSELIDSKLDMIVSGSSNAVLMVESSSNILQEKNILEAILFGNEQNKIVIENIDKLKKKFKKENLEYDLKSLNNNDIQFVIEDLFFDRIKDSYKIPEKKKRLEKIENIKNDILNNFINNNNTNEEEILYIIQNIERKIVRNRIISGKPRIDGRTEDMVRNLDIHLGILPRTHGSSLFTRGETQALVTTTLGTERDAQNIDDLVGDKIDRFLFHYNFPPYCVGEVGIISSPKRREIGHGKLAKRGMLAVMPDIDKFPYTIRIVSEITESNGSSSMASVCGASLSLMDAGVPISSSVAGIAMGLIKEKDKFVVLTDILGDEDYLGDMDFKVMGTREGVTALQMDIKIEGITSEILQVSLDKAKNARINILNEMDKVIKKPKNEISIFAPRIYKIKINPEKIKDVIGKGGSVIRMLTEKTKSSIEIEDDGTVKVISTDIKNAQCALKKIKDITHEIKINKIYVAKITRISEFGIFACLINNKEGLIHVSKIPYKKFSDINNNFKIGQIISVKVIEIDRYGRIRLSFTGTDKNKNKKFFNKNN.

Mg(2+)-binding residues include aspartate 486 and aspartate 492. In terms of domain architecture, KH spans proline 553–isoleucine 612. Residues asparagine 622 to threonine 690 enclose the S1 motif domain.

It belongs to the polyribonucleotide nucleotidyltransferase family. Component of the RNA degradosome, which is a multiprotein complex involved in RNA processing and mRNA degradation. The cofactor is Mg(2+).

Its subcellular location is the cytoplasm. It catalyses the reaction RNA(n+1) + phosphate = RNA(n) + a ribonucleoside 5'-diphosphate. Functionally, involved in mRNA degradation. Catalyzes the phosphorolysis of single-stranded polyribonucleotides processively in the 3'- to 5'-direction. The sequence is that of Polyribonucleotide nucleotidyltransferase from Wigglesworthia glossinidia brevipalpis.